The primary structure comprises 200 residues: Peptidyl-tRNA hydrolase (200 aa).

Position 23 (Tyr23) interacts with tRNA. The active-site Proton acceptor is His28. Residues Phe79, Asn81, and Asn127 each contribute to the tRNA site.

The protein belongs to the PTH family. As to quaternary structure, monomer.

Its subcellular location is the cytoplasm. The catalysed reaction is an N-acyl-L-alpha-aminoacyl-tRNA + H2O = an N-acyl-L-amino acid + a tRNA + H(+). Functionally, hydrolyzes ribosome-free peptidyl-tRNAs (with 1 or more amino acids incorporated), which drop off the ribosome during protein synthesis, or as a result of ribosome stalling. Catalyzes the release of premature peptidyl moieties from peptidyl-tRNA molecules trapped in stalled 50S ribosomal subunits, and thus maintains levels of free tRNAs and 50S ribosomes. In Streptomyces coelicolor (strain ATCC BAA-471 / A3(2) / M145), this protein is Peptidyl-tRNA hydrolase.